Here is a 185-residue protein sequence, read N- to C-terminus: Photosystem I assembly protein Ycf4 (185 aa).

The next 2 helical transmembrane spans lie at Gly20–Ala40 and Ile57–Ser77.

This sequence belongs to the Ycf4 family.

Its subcellular location is the plastid. It is found in the chloroplast thylakoid membrane. In terms of biological role, seems to be required for the assembly of the photosystem I complex. In Lolium perenne (Perennial ryegrass), this protein is Photosystem I assembly protein Ycf4.